The following is a 119-amino-acid chain: uncharacterized protein (119 aa).

Positions 67 to 119 (LGLKEVQKKSNEGLNEVQGVADINKQKRPANSQDSSSVEGDIQNFLEKVTGKN) are disordered. The span at 95 to 104 (PANSQDSSSV) shows a compositional bias: polar residues.

This is an uncharacterized protein from Anabaena variabilis.